Here is a 189-residue protein sequence, read N- to C-terminus: uncharacterized protein (189 aa).

This is an uncharacterized protein from Human adenovirus B serotype 7 (HAdV-7).